The primary structure comprises 398 residues: Riboflavin biosynthesis protein RibBA (398 aa).

The DHBP synthase stretch occupies residues 1 to 199 (MFHPIEEALE…IKDLIEYRYN (199 aa)). Residues 26–27 (RE), aspartate 31, 138–142 (RAGHT), and glutamate 162 each bind D-ribulose 5-phosphate. Glutamate 27 contributes to the Mg(2+) binding site. Histidine 141 is a binding site for Mg(2+). The segment at 200 to 398 (ITTLVNREVD…MKKLGHLLHF (199 aa)) is GTP cyclohydrolase II. 251-255 (RVHSE) provides a ligand contact to GTP. The Zn(2+) site is built by cysteine 256, cysteine 267, and cysteine 269. Residues glutamine 272, 294 to 296 (EGR), and threonine 316 each bind GTP. The active-site Proton acceptor; for GTP cyclohydrolase activity is the aspartate 328. Arginine 330 serves as the catalytic Nucleophile; for GTP cyclohydrolase activity. Threonine 351 and lysine 356 together coordinate GTP.

In the N-terminal section; belongs to the DHBP synthase family. It in the C-terminal section; belongs to the GTP cyclohydrolase II family. The cofactor is Mg(2+). Requires Mn(2+) as cofactor. It depends on Zn(2+) as a cofactor.

The enzyme catalyses D-ribulose 5-phosphate = (2S)-2-hydroxy-3-oxobutyl phosphate + formate + H(+). It carries out the reaction GTP + 4 H2O = 2,5-diamino-6-hydroxy-4-(5-phosphoribosylamino)-pyrimidine + formate + 2 phosphate + 3 H(+). The protein operates within cofactor biosynthesis; riboflavin biosynthesis; 2-hydroxy-3-oxobutyl phosphate from D-ribulose 5-phosphate: step 1/1. Its pathway is cofactor biosynthesis; riboflavin biosynthesis; 5-amino-6-(D-ribitylamino)uracil from GTP: step 1/4. Functionally, catalyzes the conversion of D-ribulose 5-phosphate to formate and 3,4-dihydroxy-2-butanone 4-phosphate. Its function is as follows. Catalyzes the conversion of GTP to 2,5-diamino-6-ribosylamino-4(3H)-pyrimidinone 5'-phosphate (DARP), formate and pyrophosphate. The chain is Riboflavin biosynthesis protein RibBA from Bacillus velezensis (strain DSM 23117 / BGSC 10A6 / LMG 26770 / FZB42) (Bacillus amyloliquefaciens subsp. plantarum).